We begin with the raw amino-acid sequence, 413 residues long: Multidrug resistance protein MdtA (413 aa).

The N-terminal stretch at 1–20 (MKGSNTFRWAIAIGVVVAAA) is a signal peptide. Disordered stretches follow at residues 31–57 (SPTAAPGVAAQAQHTAAAGRRGMRDGP) and 391–413 (EPQTTMADEKSPSRHEGQKGARA). The segment covering 32–49 (PTAAPGVAAQAQHTAAAG) has biased composition (low complexity). Basic and acidic residues predominate over residues 397-413 (ADEKSPSRHEGQKGARA).

The protein belongs to the membrane fusion protein (MFP) (TC 8.A.1) family. In terms of assembly, part of a tripartite efflux system composed of MdtA, MdtB and MdtC.

It is found in the cell inner membrane. This chain is Multidrug resistance protein MdtA, found in Salmonella typhi.